Reading from the N-terminus, the 347-residue chain is Lipopolysaccharide core heptosyltransferase OpsX (347 aa).

The protein belongs to the glycosyltransferase 9 family.

Its pathway is bacterial outer membrane biogenesis; LPS core biosynthesis. In terms of biological role, catalyzes heptose transfer to the lipopolysaccharide core. It transfers the first L-glycero-D-manno-heptose to the phosphorylated 3-deoxy-alpha-D-manno-octulosonic acid (Kdo-P) of the inner core. In Haemophilus influenzae (strain ATCC 51907 / DSM 11121 / KW20 / Rd), this protein is Lipopolysaccharide core heptosyltransferase OpsX.